We begin with the raw amino-acid sequence, 205 residues long: MISMMSLDSTQSTGAFLDGQLLIAMPNMVDNRFARSVIYLCAHSEEGAMGIVLNRAARKINFPQLLVQLEVIGADEAIRLPNSAETMQVLNGGPVETGRGFVLHSDDFFIDNSTLPIDGGVSLTATIDILRAIAKGSGPHQAILALGYAGWSAGQLEEEIQHNGWLNCPADPSLIFDDALGSKYERALRKVGIDPGYLSSEAGHA.

This sequence belongs to the UPF0301 (AlgH) family.

This chain is UPF0301 protein Bind_0718, found in Beijerinckia indica subsp. indica (strain ATCC 9039 / DSM 1715 / NCIMB 8712).